The sequence spans 614 residues: Dihydroxy-acid dehydratase (614 aa).

Position 81 (D81) interacts with Mg(2+). C122 lines the [2Fe-2S] cluster pocket. The Mg(2+) site is built by D123 and K124. K124 is modified (N6-carboxylysine). Residue C193 coordinates [2Fe-2S] cluster. E489 provides a ligand contact to Mg(2+). S515 acts as the Proton acceptor in catalysis.

This sequence belongs to the IlvD/Edd family. Homodimer. It depends on [2Fe-2S] cluster as a cofactor. The cofactor is Mg(2+).

It catalyses the reaction (2R)-2,3-dihydroxy-3-methylbutanoate = 3-methyl-2-oxobutanoate + H2O. It carries out the reaction (2R,3R)-2,3-dihydroxy-3-methylpentanoate = (S)-3-methyl-2-oxopentanoate + H2O. It functions in the pathway amino-acid biosynthesis; L-isoleucine biosynthesis; L-isoleucine from 2-oxobutanoate: step 3/4. Its pathway is amino-acid biosynthesis; L-valine biosynthesis; L-valine from pyruvate: step 3/4. Functionally, functions in the biosynthesis of branched-chain amino acids. Catalyzes the dehydration of (2R,3R)-2,3-dihydroxy-3-methylpentanoate (2,3-dihydroxy-3-methylvalerate) into 2-oxo-3-methylpentanoate (2-oxo-3-methylvalerate) and of (2R)-2,3-dihydroxy-3-methylbutanoate (2,3-dihydroxyisovalerate) into 2-oxo-3-methylbutanoate (2-oxoisovalerate), the penultimate precursor to L-isoleucine and L-valine, respectively. In Marinomonas sp. (strain MWYL1), this protein is Dihydroxy-acid dehydratase.